A 1511-amino-acid polypeptide reads, in one-letter code: MAALCLTVNAGDPPLDALLAVEHVKGDVSVSVEEGKENLLRVSEDVVFTDINSILRYLARVATTSGLYGTNLMEHTEIDHWLEFSATKLSSCAALTSALTELNHCLSLRTYLVGNSLTLADLCVWATLKGNAAWQEQLEQNKTLVHVKRWFGFLEAQQAFRSVGTKWDVSENKARVVPDKKQDVGKFVELPGAEMGKVTVRFPPEASGYLHIGHAKAALLNQHYQVNFKGKLIMRFDDTNPEKEKEDFEKVILEDVAMLHIKPDQFTYTSDHFETIMKYAEKLIQEGKAYVDDTPAEQMKAEREQRAESKHRQNSVEKNLQMWEEMKKGSPFGQSCCLRAKIDMSSNNGCMRDPTLYRCKIQPHPRTGNKYNVYPTYDFACPIVDSIEGVTHALRTTEYHDRDEQFYWIIEALGIRKPYIWEYSRLNLNNTVLSKRKLTWFVNEGLVDGWDDPRFPTVRGVLRRGMTVEGLKQFIAAQGSSRSVVNMEWDKIWAFNKKVIDPVAPRYVALLKKEVVPVNVPEAQEEMKEVARHPKNPDVGLKPVWYSPKVFIEGADAETFSEGEMVTFINWGNINITKIHKNADGKITSLDAKLNLENKDYKKTTKITWLAETTHALPIPAICVTYEHLITKPVLGKDEDFKQYVNKDSKHEELMLGDPCLKDLKKGDIIQLQRRGFFICDQPYEPVSPYSCKEAPCILIYIPDGHTKEMPTSGSKEKTKAEPLKKETSSAPKEGPVPAVSPCAASEESSVLYNRVAAQGDVVRELKAKKAAKEDVDAAVKQLLALKAEYKQKTGQEYKPGNPPSAAAQSASTKSLPSAGEDRSLYDKIAAQGEVVRKLKAEKAPKAKVTEAVECLLSLKAEYKEKTGKEYVPGQPPASQKSQPSPASKAEPAGPETTEAKALFDRVACQGEVVRKLKAEKASKDQVDPAVQELLQLKAQYKSLTGIEYKPVSATGSEDKDKKKKEKENKSEKQNKPQKQNDGPGKDSSKSQGGGLSSSGAGEGQGPKKQTRLGLEAKKEENLAEWYSQVITKSEMIEYYDVSGCYILRPWSYSIWESIKDFFDTEIKKLGVENCYFPIFVSQAALEKEKSHIEDFAPEVAWVTRSGKTELAEPIAIRPTSETVMYPAYAKWVQSHRDLPIRLNQWCNVVRWEFKHPQPFLRTREFLWQEGHSAFATFEEAADEVMQILELYARVYEELLAIPVVRGRKTEKEKFAGGDYTTTVEAFISASGRAIQGATSHHLGQNFSKMCEIVFEDPKTPGEKQFAFQCSWGLTTRTIGVMIMVHGDNMGLVLPPRVACVQVVVIPCGITNALSEEDREALMAKCNEYRKRLLGVNIRVRVDLRDNYSPGWKFNHWELKGVPVRLEVGPRDMKSCQFVAVRRDTGEKLTIAEKEAESKLQEILEDIQLNLFTRASEDLKTHMVVSNTLEDFQKVLDSGKIAQIPFCGEIDCEDWIKKTTARDQDVEPGAPSMGAKSLCIPFTPLCELQPGAMCVCGKNPAKFYTLFGRSY.

Residues 164 to 758 form a glutamate--tRNA ligase region; the sequence is GTKWDVSENK…SSVLYNRVAA (595 aa). Positions 204 to 214 match the 'HIGH' region motif; that stretch reads PEASGYLHIGH. A disordered region spans residues 296–315; that stretch reads AEQMKAEREQRAESKHRQNS. Over residues 299 to 315 the composition is skewed to basic and acidic residues; sequence MKAEREQRAESKHRQNS. Position 300 is an N6-acetyllysine; alternate (Lys-300). Residue Lys-300 is modified to N6-malonyllysine; alternate. Thr-355 carries the phosphothreonine modification. Lys-417 bears the N6-acetyllysine mark. A 'KMSKS' region motif is present at residues 432-436; sequence VLSKR. Ser-434 is modified (phosphoserine). N6-acetyllysine is present on residues Lys-498, Lys-535, Lys-542, and Lys-637. Residues 708–728 are compositionally biased toward basic and acidic residues; that stretch reads KEMPTSGSKEKTKAEPLKKET. The interval 708-741 is disordered; it reads KEMPTSGSKEKTKAEPLKKETSSAPKEGPVPAVS. Residue Ser-746 is modified to Phosphoserine. The WHEP-TRS 1 domain occupies 748 to 804; that stretch reads ESSVLYNRVAAQGDVVRELKAKKAAKEDVDAAVKQLLALKAEYKQKTGQEYKPGNPP. The 3 X 57 AA approximate repeats stretch occupies residues 759 to 955; it reads QGDVVRELKA…GIEYKPVSAT (197 aa). At Lys-787 the chain carries N6-acetyllysine. The disordered stretch occupies residues 794-823; that stretch reads TGQEYKPGNPPSAAAQSASTKSLPSAGEDR. Polar residues predominate over residues 807–816; sequence AAQSASTKSL. The 57-residue stretch at 821–877 folds into the WHEP-TRS 2 domain; sequence EDRSLYDKIAAQGEVVRKLKAEKAPKAKVTEAVECLLSLKAEYKEKTGKEYVPGQPP. N6-acetyllysine is present on Lys-860. Disordered stretches follow at residues 868–903 and 952–1015; these read GKEYVPGQPPASQKSQPSPASKAEPAGPETTEAKAL and VSAT…RLGL. At Tyr-871 the chain carries Phosphotyrosine. A compositionally biased stretch (low complexity) spans 877–890; that stretch reads PASQKSQPSPASKA. Ser-885 bears the Phosphoserine; by CDK5 mark. Thr-897 carries the post-translational modification Phosphothreonine. The 57-residue stretch at 899-955 folds into the WHEP-TRS 3 domain; it reads EAKALFDRVACQGEVVRKLKAEKASKDQVDPAVQELLQLKAQYKSLTGIEYKPVSAT. Residues 957–975 show a composition bias toward basic and acidic residues; it reads SEDKDKKKKEKENKSEKQN. Positions 992–1005 are enriched in gly residues; it reads QGGGLSSSGAGEGQ. Ser-997 is subject to Phosphoserine. Ser-998 is subject to Phosphoserine; by RPS6KB1. Ser-999 bears the Phosphoserine mark. The segment at 1006–1511 is proline--tRNA ligase; sequence GPKKQTRLGL…KFYTLFGRSY (506 aa). Residues 1120-1122 and Arg-1151 each bind L-proline; that span reads TSE. 6 residues coordinate ATP: Arg-1151, Glu-1153, Arg-1162, Thr-1163, Gln-1236, and Thr-1239. The residue at position 1151 (Arg-1151) is an Omega-N-methylarginine. Gln-1236 is a Mg(2+) binding site. L-proline is bound at residue His-1241. ATP contacts are provided by Thr-1275 and Arg-1277. Ser-1349 carries the post-translational modification Phosphoserine. 4 residues coordinate Zn(2+): Cys-1447, Cys-1452, Cys-1494, and Cys-1496. Position 1502 is an N6-acetyllysine (Lys-1502).

This sequence in the N-terminal section; belongs to the class-I aminoacyl-tRNA synthetase family. Glutamate--tRNA ligase type 2 subfamily. In the C-terminal section; belongs to the class-II aminoacyl-tRNA synthetase family. In terms of assembly, homodimer. Part of the aminoacyl-tRNA synthetase multienzyme complex, also know as multisynthetase complex, that is composed of the tRNA ligases for Arg (RARS1), Asp (DARS1), Gln (QARS1), Ile (IARS1), Leu (LARS1), Lys (KARS1), Met (MARS1) the bifunctional ligase for Glu and Pro (EPRS1) and the auxiliary subunits AIMP1/p43, AIMP2/p38 and EEF1E1/p18. Forms a linear complex that contains MARS1, EEF1E1, EPRS1 and AIMP2 that is at the core of the multisubunit complex. Interacts with TARS3. Interacts with DUS2L. Component of the GAIT complex which is composed of EPRS1, RPL13A and GAPDH. Interacts (phosphorylated at Ser-998) with SLC27A1; mediates the translocation of SLC27A1 from the cytoplasm to the plasma membrane thereby increasing the uptake of long-chain fatty acids. In terms of processing, phosphorylated at Ser-998 by RPS6KB1; triggers EPRS1 release from the aminoacyl-tRNA synthetase multienzyme complex. In monocytes, the IFN-gamma-induced phosphorylation at Ser-998 releases EPRS1 from the aminoacyl-tRNA synthetase multienzyme complex, allowing its association with the GAIT complex. Phosphorylation at Ser-998 is specifically required for the RPL13A-mediated interaction of the GAIT complex with eIF4G. Phosphorylation at Ser-998 by RPS6KB1, is also induced by insulin through activation of the mTORC1 signaling pathway and promotes the interaction of EPRS1 with SLC27A1.

It is found in the cytoplasm. The protein localises to the cytosol. It localises to the membrane. It carries out the reaction tRNA(Glu) + L-glutamate + ATP = L-glutamyl-tRNA(Glu) + AMP + diphosphate. The enzyme catalyses tRNA(Pro) + L-proline + ATP = L-prolyl-tRNA(Pro) + AMP + diphosphate. In terms of biological role, multifunctional protein which primarily functions within the aminoacyl-tRNA synthetase multienzyme complex, also known as multisynthetase complex. Within the complex it catalyzes the attachment of both L-glutamate and L-proline to their cognate tRNAs in a two-step reaction where the amino acid is first activated by ATP to form a covalent intermediate with AMP. Subsequently, the activated amino acid is transferred to the acceptor end of the cognate tRNA to form L-glutamyl-tRNA(Glu) and L-prolyl-tRNA(Pro). Upon interferon-gamma stimulation, EPRS1 undergoes phosphorylation, causing its dissociation from the aminoacyl-tRNA synthetase multienzyme complex. It is recruited to form the GAIT complex, which binds to stem loop-containing GAIT elements found in the 3'-UTR of various inflammatory mRNAs, such as ceruloplasmin. The GAIT complex inhibits the translation of these mRNAs, allowing interferon-gamma to redirect the function of EPRS1 from protein synthesis to translation inhibition in specific cell contexts. Furthermore, it can function as a downstream effector in the mTORC1 signaling pathway, by promoting the translocation of SLC27A1 from the cytoplasm to the plasma membrane where it mediates the uptake of long-chain fatty acid by adipocytes. Thereby, EPRS1 also plays a role in fat metabolism and more indirectly influences lifespan. This chain is Bifunctional glutamate/proline--tRNA ligase, found in Cricetulus griseus (Chinese hamster).